We begin with the raw amino-acid sequence, 436 residues long: GTPase Der (436 aa).

EngA-type G domains lie at 4-167 and 176-351; these read PVIA…PKIE and IRFS…ESHS. GTP-binding positions include 10 to 17, 57 to 61, 119 to 122, 182 to 189, 229 to 233, and 294 to 297; these read GRPNVGKS, DTGGI, NKVD, DTAGM, and NKWD. The 85-residue stretch at 352–436 folds into the KH-like domain; it reads IRIQTNVLND…PIHIIARARD (85 aa).

Belongs to the TRAFAC class TrmE-Era-EngA-EngB-Septin-like GTPase superfamily. EngA (Der) GTPase family. In terms of assembly, associates with the 50S ribosomal subunit.

GTPase that plays an essential role in the late steps of ribosome biogenesis. The sequence is that of GTPase Der from Bacillus anthracis (strain A0248).